The following is a 106-amino-acid chain: Immunoglobulin lambda constant 7 (106 aa).

An Ig-like domain is found at 7-101 (PSVTLFPPSS…EGSTVEKTVA (95 aa)). Cys-28 and Cys-87 are disulfide-bonded.

As to quaternary structure, immunoglobulins are composed of two identical heavy chains and two identical light chains; disulfide-linked.

The protein resides in the secreted. Its subcellular location is the cell membrane. Its function is as follows. Constant region of immunoglobulin light chains. Immunoglobulins, also known as antibodies, are membrane-bound or secreted glycoproteins produced by B lymphocytes. In the recognition phase of humoral immunity, the membrane-bound immunoglobulins serve as receptors which, upon binding of a specific antigen, trigger the clonal expansion and differentiation of B lymphocytes into immunoglobulins-secreting plasma cells. Secreted immunoglobulins mediate the effector phase of humoral immunity, which results in the elimination of bound antigens. The antigen binding site is formed by the variable domain of one heavy chain, together with that of its associated light chain. Thus, each immunoglobulin has two antigen binding sites with remarkable affinity for a particular antigen. The variable domains are assembled by a process called V-(D)-J rearrangement and can then be subjected to somatic hypermutations which, after exposure to antigen and selection, allow affinity maturation for a particular antigen. This chain is Immunoglobulin lambda constant 7, found in Homo sapiens (Human).